The primary structure comprises 206 residues: Thymidylate kinase (206 aa).

10 to 17 (GIDGAGKS) provides a ligand contact to ATP.

Belongs to the thymidylate kinase family.

The catalysed reaction is dTMP + ATP = dTDP + ADP. Its function is as follows. Phosphorylation of dTMP to form dTDP in both de novo and salvage pathways of dTTP synthesis. This chain is Thymidylate kinase, found in Neisseria meningitidis serogroup C / serotype 2a (strain ATCC 700532 / DSM 15464 / FAM18).